We begin with the raw amino-acid sequence, 562 residues long: Methionine--tRNA ligase, mitochondrial (562 aa).

The transit peptide at 1–10 (MLRSLALRTF) directs the protein to the mitochondrion. The 'HIGH' region motif lies at 43 to 53 (FYVNAAPHLGH). Residues 332–336 (KMSKS) carry the 'KMSKS' region motif. An ATP-binding site is contributed by Lys-335.

This sequence belongs to the class-I aminoacyl-tRNA synthetase family.

It is found in the mitochondrion matrix. It carries out the reaction tRNA(Met) + L-methionine + ATP = L-methionyl-tRNA(Met) + AMP + diphosphate. In Xenopus laevis (African clawed frog), this protein is Methionine--tRNA ligase, mitochondrial (mars2).